The primary structure comprises 231 residues: Orotate phosphoribosyltransferase (231 aa).

5-phospho-alpha-D-ribose 1-diphosphate-binding positions include Lys-27, 79 to 80 (YK), Arg-106, Lys-107, Lys-110, His-112, and 133 to 141 (DDVMTAGTA). Thr-137 and Arg-166 together coordinate orotate.

It belongs to the purine/pyrimidine phosphoribosyltransferase family. PyrE subfamily. Homodimer. Mg(2+) is required as a cofactor.

The catalysed reaction is orotidine 5'-phosphate + diphosphate = orotate + 5-phospho-alpha-D-ribose 1-diphosphate. It functions in the pathway pyrimidine metabolism; UMP biosynthesis via de novo pathway; UMP from orotate: step 1/2. Catalyzes the transfer of a ribosyl phosphate group from 5-phosphoribose 1-diphosphate to orotate, leading to the formation of orotidine monophosphate (OMP). This is Orotate phosphoribosyltransferase from Bifidobacterium longum (strain NCC 2705).